We begin with the raw amino-acid sequence, 515 residues long: MDEFHRCGKEDSFWQQCFLYPLFFQEDLYAISHDHYLDVSSSSRPMEHLSSNDQLSFLTVKRLIGQIRQQNHSIVLFVNCDPNPLADRKKSFYSESVLEALTLVLEVPFSIWSKYSVEGMNESKSFRSIHSIFPFLEDKFPHSNSILDARIPYSIHPEILVRTFRRWIRDAPSLHPLRSVLYEYRNSPDNLQRSIIVVPRVNTRFFLFLWNYYVCECESILFSRLKRSSHSRSLSHGSFPQRTHFHRKIKHIIIFSRRNSLKSIWSLKDPKIHYVRYGERPIIAIKGAHLLVKKCRYYLLIFRQFYFHLWSEPYRVCSHQLSKNCSSSLGYFLRVRMNPILVRTKMLDELFIADLITDEIDPIVPIVPIIGLLATEKFCDISGRPISKLSWTSLTDDDILDRFDQIWRNLFHYYSGSFDRDGLYRIKYILSLSCAKTLACKHKSTIRVVRKELGPELFKKSFSKEREFYSLRFSSKAAARSQRERIWHSDIPQINPLANSWQKIQDLKIENLFDQ.

Belongs to the intron maturase 2 family. MatK subfamily.

It is found in the plastid. It localises to the chloroplast. Functionally, usually encoded in the trnK tRNA gene intron. Probably assists in splicing its own and other chloroplast group II introns. The polypeptide is Maturase K (Pinus attenuata (Knobcone pine)).